The sequence spans 286 residues: MQFIGKIIGFFIGYKLFGGLFGGLLGIFIGHLADKKLYELGSVRSSIFGKNLTRQSLFMQTTFAVLGHIAKAKGRVTEDDIQLARQLMVRLRLDNANQQLAQQAFTLGKEANFPLRQVIQEFREACGQRADLLRFFVEVQMQAAAQDGQLDINEQQILFTIAETIGMSRFQFEQMLAMVMAAQQFRSGGFYQQYSQQQGSYQQHSYDGYQYSNNGPNIKDAYTVLGINENDEHNAVKRAYRKLMNEHHPDKLAAKGLPDEMMELAKEKAQQIQAAYDLICKTKGWK.

At 1–6 (MQFIGK) the chain is on the periplasmic side. A helical transmembrane segment spans residues 7–31 (IIGFFIGYKLFGGLFGGLLGIFIGH). Over 32–286 (LADKKLYELG…DLICKTKGWK (255 aa)) the chain is Cytoplasmic. Residues 220 to 286 (DAYTVLGINE…DLICKTKGWK (67 aa)) enclose the J domain.

Homodimer.

The protein resides in the cell inner membrane. In terms of biological role, regulatory DnaK co-chaperone. Direct interaction between DnaK and DjlA is needed for the induction of the wcaABCDE operon, involved in the synthesis of a colanic acid polysaccharide capsule, possibly through activation of the RcsB/RcsC phosphotransfer signaling pathway. The colanic acid capsule may help the bacterium survive conditions outside the host. The sequence is that of Co-chaperone protein DjlA from Haemophilus ducreyi (strain 35000HP / ATCC 700724).